The following is an 859-amino-acid chain: DNA mismatch repair protein MutS (859 aa).

614–621 (GPNMGGKS) provides a ligand contact to ATP.

Belongs to the DNA mismatch repair MutS family.

Its function is as follows. This protein is involved in the repair of mismatches in DNA. It is possible that it carries out the mismatch recognition step. This protein has a weak ATPase activity. This chain is DNA mismatch repair protein MutS, found in Histophilus somni (strain 2336) (Haemophilus somnus).